The following is a 491-amino-acid chain: UDP-N-acetylmuramoyl-L-alanyl-D-glutamate--2,6-diaminopimelate ligase (491 aa).

Residue S30 coordinates UDP-N-acetyl-alpha-D-muramoyl-L-alanyl-D-glutamate. 108 to 114 provides a ligand contact to ATP; sequence GTNGKTT. UDP-N-acetyl-alpha-D-muramoyl-L-alanyl-D-glutamate-binding positions include N149, 150-151, S177, Q183, and R185; that span reads TT. N6-carboxylysine is present on K217. Residues R383, 407-410, G458, and E462 each bind meso-2,6-diaminopimelate; that span reads DNPR. The Meso-diaminopimelate recognition motif signature appears at 407–410; it reads DNPR.

The protein belongs to the MurCDEF family. MurE subfamily. The cofactor is Mg(2+). Carboxylation is probably crucial for Mg(2+) binding and, consequently, for the gamma-phosphate positioning of ATP.

It is found in the cytoplasm. The enzyme catalyses UDP-N-acetyl-alpha-D-muramoyl-L-alanyl-D-glutamate + meso-2,6-diaminopimelate + ATP = UDP-N-acetyl-alpha-D-muramoyl-L-alanyl-gamma-D-glutamyl-meso-2,6-diaminopimelate + ADP + phosphate + H(+). It participates in cell wall biogenesis; peptidoglycan biosynthesis. Catalyzes the addition of meso-diaminopimelic acid to the nucleotide precursor UDP-N-acetylmuramoyl-L-alanyl-D-glutamate (UMAG) in the biosynthesis of bacterial cell-wall peptidoglycan. This chain is UDP-N-acetylmuramoyl-L-alanyl-D-glutamate--2,6-diaminopimelate ligase, found in Listeria monocytogenes serotype 4b (strain F2365).